The chain runs to 111 residues: Large ribosomal subunit protein uL22 (111 aa).

It belongs to the universal ribosomal protein uL22 family. As to quaternary structure, part of the 50S ribosomal subunit.

This protein binds specifically to 23S rRNA; its binding is stimulated by other ribosomal proteins, e.g. L4, L17, and L20. It is important during the early stages of 50S assembly. It makes multiple contacts with different domains of the 23S rRNA in the assembled 50S subunit and ribosome. Its function is as follows. The globular domain of the protein is located near the polypeptide exit tunnel on the outside of the subunit, while an extended beta-hairpin is found that lines the wall of the exit tunnel in the center of the 70S ribosome. The chain is Large ribosomal subunit protein uL22 from Geobacter sulfurreducens (strain ATCC 51573 / DSM 12127 / PCA).